Here is a 246-residue protein sequence, read N- to C-terminus: MyoD family inhibitor domain-containing protein (246 aa).

The tract at residues 1–71 (MSGAGEALAP…WGNPSDGELI (71 aa)) is disordered. A compositionally biased stretch (basic and acidic residues) spans 33-43 (KCDKDNTEKDI). The span at 44-63 (TQATNSHFTHGEMQDQSIWG) shows a compositional bias: polar residues. One can recognise an MDFI domain in the interval 74–246 (QPQRLPQLQT…MECCGICFPS (173 aa)). Residues S128, S140, and S143 each carry the phosphoserine modification.

Belongs to the MDFI family. In terms of assembly, interacts with HAND1; the interaction sequesters HAND1 into the nucleolus and inhibits its activity. Interacts (via C-terminus) with ZIC2. Interacts (via C-terminus) with AXIN1, the histidine-rich region of CCNT1/cyclin-T and weakly with LEF1. Interacts with CCNT2. Interacts with GATA2. Interacts (via C-terminus) with Piezo channel composed of PIEZO1 or PIEZO2; the interaction prolongs Piezo channel inactivation. As to quaternary structure, (Microbial infection) Interacts (via C-terminus) with HIV-1 Tat and Rev. Post-translationally, palmitoylated. Expressed in lymphatic tissues. Detected in the spleen, thymus, peripheral blood leukocytes as well as prostate, uterus and small intestine. Expressed in lymphatic endothelial cells.

Its subcellular location is the nucleus. It is found in the nucleolus. The protein localises to the cytoplasm. It localises to the secreted. Required to control the activity of various transcription factors through their sequestration in the cytoplasm. Retains nuclear Zic proteins ZIC1, ZIC2 and ZIC3 in the cytoplasm and inhibits their transcriptional activation. Modulates the expression from cellular promoters. Binds to the axin complex, resulting in an increase in the level of free beta-catenin. Affects axin regulation of the WNT and JNK signaling pathways. Involved in the development of lymphatic vessel valves. Required to promote lymphatic endothelial cell migration, in a process that involves down-regulation of integrin beta 1 activation and control of cell adhesion to the extracellular matrix. Regulates the activity of mechanosensitive Piezo channel. Functionally, (Microbial infection) Modulates the expression from viral promoters. Down-regulates Tat-dependent transcription of the human immunodeficiency virus type 1 (HIV-1) LTR by interacting with HIV-1 Tat and Rev and impairing their nuclear import, probably by rendering the NLS domains inaccessible to importin-beta. Also stimulates activation of human T-cell leukemia virus type I (HTLV-I) LTR. The protein is MyoD family inhibitor domain-containing protein of Homo sapiens (Human).